The sequence spans 313 residues: MGNRKRPGRPISGVIVIDKPAGDSSNGVLQRVKRLFFANKAGHTGSLDPLATGVLPVCFGDATKFSQFLLDSDKEYVSTFRFGEVTDTADSDGEVLESIDASKLTKADVLKAIKAYIGDIDQVPPMYSALKRNGQPLYKLARQGIEVEREPRPVTVYEFELLAFRPGAVAEADVRVFCSKGTYIRSLASDIGADLELGGHVAKLRRTQAGPFTIDQSITIEELEQERGERLAEVLDHHLLPTDIAVADFPSLELDDNSAFYFSRGQAVMDSRVYRLGDEGDKVRVFDSSGKFYGVAEITDEGTVAPKRLVSQS.

The active-site Nucleophile is Asp48.

Belongs to the pseudouridine synthase TruB family. Type 1 subfamily.

The enzyme catalyses uridine(55) in tRNA = pseudouridine(55) in tRNA. Functionally, responsible for synthesis of pseudouridine from uracil-55 in the psi GC loop of transfer RNAs. This Saccharophagus degradans (strain 2-40 / ATCC 43961 / DSM 17024) protein is tRNA pseudouridine synthase B.